A 457-amino-acid polypeptide reads, in one-letter code: Angiopoietin-related protein 6 (457 aa).

The first 24 residues, 1 to 24 (MGTARLRKLQLLLLLGAWRALGGA), serve as a signal peptide directing secretion. 2 coiled-coil regions span residues 51–77 (DSELATLRMRLGRHEELLRALQRRAAE) and 126–164 (LLAERALDAEAEARRTTARLQQLDAQLREHAQLMSQHSS). Residues 201–235 (SNTSRRLDQTPEHQREQSLRQQGPPSSLLPTGHLA) are disordered. Residue asparagine 202 is glycosylated (N-linked (GlcNAc...) asparagine). Residues 205–218 (RRLDQTPEHQREQS) are compositionally biased toward basic and acidic residues. Residues 219 to 229 (LRQQGPPSSLL) are compositionally biased toward polar residues. Residues 238 to 456 (TRPVGPWRDC…KAVMLTRLVR (219 aa)) form the Fibrinogen C-terminal domain. Disulfide bonds link cysteine 247–cysteine 274 and cysteine 397–cysteine 410.

In terms of tissue distribution, highly expressed in the liver, specifically in hepatocytes, and weakly in the heart. Expressed in hematopoietic cells, platelets and mast cells, and detected at wounded skin.

The protein resides in the secreted. Functionally, may play a role in the wound healing process. May promote epidermal proliferation, remodeling and regeneration. May promote the chemotactic activity of endothelial cells and induce neovascularization. May counteract high-fat diet-induced obesity and related insulin resistance through increased energy expenditure. This chain is Angiopoietin-related protein 6 (Angptl6), found in Mus musculus (Mouse).